The following is a 311-amino-acid chain: Olfactory receptor 8B8 (311 aa).

At 1 to 25 (MAAENSSFVTQFILAGLTDQPGVQI) the chain is on the extracellular side. An N-linked (GlcNAc...) asparagine glycan is attached at Asn-5. Residues 26–46 (PLFFLFLGFYVVTVVGNLGLI) traverse the membrane as a helical segment. The Cytoplasmic portion of the chain corresponds to 47 to 54 (TLIRLNSH). A helical transmembrane segment spans residues 55 to 75 (LHTPMYFFLYNLSFIDFCYSS). The Extracellular portion of the chain corresponds to 76 to 99 (VITPKMLMSFVLKKNSISYAGCMT). The cysteines at positions 97 and 189 are disulfide-linked. The helical transmembrane segment at 100–120 (QLFFFLFFVVSESFILSAMAY) threads the bilayer. The Cytoplasmic portion of the chain corresponds to 121-139 (DRYVAICNPLLYMVTMSPQ). A helical membrane pass occupies residues 140–160 (VCFLLLLGVYGMGFAGAMAHT). Topologically, residues 161–197 (ACMMGVTFCANNLVNHYMCDILPLLECACTSTYVNEL) are extracellular. A helical membrane pass occupies residues 198–217 (VVFVVVGIDIGVPTVTIFIS). At 218-237 (YALILSSIFHIDSTEGRSKA) the chain is on the cytoplasmic side. A helical transmembrane segment spans residues 238–258 (FSTCSSHIIAVSLFFGSGAFM). Residues 259–271 (YLKPFSLLAMNQG) lie on the Extracellular side of the membrane. The chain crosses the membrane as a helical span at residues 272 to 292 (KVSSLFYTTVVPMLNPLIYSL). The Cytoplasmic portion of the chain corresponds to 293-311 (RNKDVKVALKKILNKNAFS).

The protein belongs to the G-protein coupled receptor 1 family. In terms of tissue distribution, expressed in the tongue and testis.

The protein localises to the cell membrane. Odorant receptor (Potential). May be involved in taste perception. This chain is Olfactory receptor 8B8, found in Homo sapiens (Human).